The primary structure comprises 389 residues: S-adenosylmethionine synthase (389 aa).

Residue His15 participates in ATP binding. Asp17 contacts Mg(2+). Glu43 contributes to the K(+) binding site. Glu56 and Gln99 together coordinate L-methionine. The interval 99–109 is flexible loop; it reads QSPDIAQGVNE. Residues 166 to 168, 234 to 235, Asp243, 249 to 250, Ala266, and Lys270 contribute to the ATP site; these read DAK, RF, and RK. Asp243 lines the L-methionine pocket. Position 274 (Lys274) interacts with L-methionine.

Belongs to the AdoMet synthase family. In terms of assembly, homotetramer; dimer of dimers. It depends on Mg(2+) as a cofactor. The cofactor is K(+).

The protein localises to the cytoplasm. The catalysed reaction is L-methionine + ATP + H2O = S-adenosyl-L-methionine + phosphate + diphosphate. Its pathway is amino-acid biosynthesis; S-adenosyl-L-methionine biosynthesis; S-adenosyl-L-methionine from L-methionine: step 1/1. In terms of biological role, catalyzes the formation of S-adenosylmethionine (AdoMet) from methionine and ATP. The overall synthetic reaction is composed of two sequential steps, AdoMet formation and the subsequent tripolyphosphate hydrolysis which occurs prior to release of AdoMet from the enzyme. This chain is S-adenosylmethionine synthase, found in Laribacter hongkongensis (strain HLHK9).